A 326-amino-acid chain; its full sequence is DNA-binding death effector domain-containing protein 2 (326 aa).

A DED domain is found at 25 to 104; sequence SLHRMFEVVG…RHDLLPHLAR (80 aa). The Nuclear localization signal motif lies at 104–109; sequence RKRRRP. Residues 104 to 194 form a disordered region; that stretch reads RKRRRPVSPE…PARPSSEGKV (91 aa). The span at 136–146 shows a compositional bias: low complexity; the sequence is SSSSANSQQGQ. Positions 155–173 match the Bipartite nuclear localization signal motif; the sequence is KRQRRSRGRPSGGARRRRR. Residues 155 to 174 show a composition bias toward basic residues; sequence KRQRRSRGRPSGGARRRRRG. Over residues 175 to 191 the composition is skewed to low complexity; the sequence is APAAPQQQSEPARPSSE.

Interacts with CASP8, CASP10 and GTF3C3. Homodimerizes and heterodimerizes with DEDD. As to expression, expressed in most tissues. High levels were found in liver, kidney, heart, ovary, spleen, testes, skeletal muscle and peripheral blood leukocytes. Expression was absent or low in colon and small intestine. Expression is relatively high in the tumor cell lines chronic myologenous leukemia K-562 and the colorectal adenocarcinoma SW480. Expression is moderate in the cervical carcinoma HeLa, the Burkitt's lymphoma Raji, the lung carcinoma A-549, and the melanoma G-361. In contrast, two leukemia cell lines, HL-60 (promyelocytic leukemia) and MOLT-4 (lymphoblastic leukemia), show relatively low levels.

The protein localises to the nucleus. The protein resides in the nucleolus. Its function is as follows. May play a critical role in death receptor-induced apoptosis and may target CASP8 and CASP10 to the nucleus. May regulate degradation of intermediate filaments during apoptosis. May play a role in the general transcription machinery in the nucleus and might be an important regulator of the activity of GTF3C3. This chain is DNA-binding death effector domain-containing protein 2 (DEDD2), found in Homo sapiens (Human).